Consider the following 452-residue polypeptide: Probable phosphoglucosamine mutase (452 aa).

Ser-96 acts as the Phosphoserine intermediate in catalysis. Positions 96, 233, 235, and 237 each coordinate Mg(2+). Ser-96 carries the post-translational modification Phosphoserine.

It belongs to the phosphohexose mutase family. It depends on Mg(2+) as a cofactor. Post-translationally, activated by phosphorylation.

It catalyses the reaction alpha-D-glucosamine 1-phosphate = D-glucosamine 6-phosphate. In terms of biological role, catalyzes the conversion of glucosamine-6-phosphate to glucosamine-1-phosphate. In Pyrococcus furiosus (strain ATCC 43587 / DSM 3638 / JCM 8422 / Vc1), this protein is Probable phosphoglucosamine mutase.